A 446-amino-acid chain; its full sequence is 3-phosphoshikimate 1-carboxyvinyltransferase (446 aa).

Residues Lys30, Ser31, and Arg35 each contribute to the 3-phosphoshikimate site. Lys30 lines the phosphoenolpyruvate pocket. Phosphoenolpyruvate is bound by residues Gly112 and Arg140. 3-phosphoshikimate-binding residues include Ser186, Ser187, Gln188, Ser215, Glu334, and His361. A phosphoenolpyruvate-binding site is contributed by Gln188. The Proton acceptor role is filled by Glu334. Phosphoenolpyruvate is bound by residues Arg365, Arg406, and Lys431.

This sequence belongs to the EPSP synthase family. Monomer.

Its subcellular location is the cytoplasm. It catalyses the reaction 3-phosphoshikimate + phosphoenolpyruvate = 5-O-(1-carboxyvinyl)-3-phosphoshikimate + phosphate. It functions in the pathway metabolic intermediate biosynthesis; chorismate biosynthesis; chorismate from D-erythrose 4-phosphate and phosphoenolpyruvate: step 6/7. Functionally, catalyzes the transfer of the enolpyruvyl moiety of phosphoenolpyruvate (PEP) to the 5-hydroxyl of shikimate-3-phosphate (S3P) to produce enolpyruvyl shikimate-3-phosphate and inorganic phosphate. The protein is 3-phosphoshikimate 1-carboxyvinyltransferase of Streptomyces avermitilis (strain ATCC 31267 / DSM 46492 / JCM 5070 / NBRC 14893 / NCIMB 12804 / NRRL 8165 / MA-4680).